The following is a 127-amino-acid chain: Basic leucine zipper transcriptional factor ATF-like 3 (127 aa).

The segment at 1–72 (MSQGLPAAGS…LHEEYESLEQ (72 aa)) is disordered. Ser2 and Ser31 each carry phosphoserine. One can recognise a bZIP domain in the interval 35–98 (DDRKVRRREK…KHLTEALKEH (64 aa)). The interval 37–62 (RKVRRREKNRVAAQRSRKKQTQKADK) is basic motif. Residues 58 to 67 (QKADKLHEEY) are compositionally biased toward basic and acidic residues. The segment at 63 to 91 (LHEEYESLEQENTMLRREIGKLTEELKHL) is leucine-zipper.

It belongs to the bZIP family. In terms of assembly, heterodimer; heterodimerizes with JUN family proteins. Interacts with JUN.

The protein resides in the nucleus. Functionally, AP-1 family transcription factor that controls the differentiation of CD8(+) thymic conventional dendritic cells in the immune system. Required for development of CD8-alpha(+) classical dendritic cells (cDCs) and related CD103(+) dendritic cells that cross-present antigens to CD8 T-cells and produce interleukin-12 (IL12) in response to pathogens. Acts via the formation of a heterodimer with JUN family proteins that recognizes and binds DNA sequence 5'-TGA[CG]TCA-3' and regulates expression of target genes. The sequence is that of Basic leucine zipper transcriptional factor ATF-like 3 (BATF3) from Homo sapiens (Human).